We begin with the raw amino-acid sequence, 347 residues long: Galactoside alpha-(1,2)-fucosyltransferase 2 (347 aa).

Residues 1–5 (MASAQ) are Cytoplasmic-facing. Residues 6–26 (VPFSFPLAHFLIFVFVTSTII) form a helical; Signal-anchor for type II membrane protein membrane-spanning segment. The Lumenal segment spans residues 27–347 (HLQQRIVKLQ…PADLSPLLKH (321 aa)). N192, N258, N286, and N312 each carry an N-linked (GlcNAc...) asparagine glycan.

Belongs to the glycosyltransferase 11 family. As to expression, expressed in stomach, colon, ovary and uterus, specifically in luminal uterine epithelium. Expressed in various tissues including heart, liver, kidney, testis, epididymis, small intestine,and cecum. Expressed in duodenum, jejunum and ileum.

Its subcellular location is the golgi apparatus. It localises to the golgi stack membrane. It catalyses the reaction a beta-D-galactosyl-(1-&gt;3)-N-acetyl-beta-D-glucosaminyl derivative + GDP-beta-L-fucose = an alpha-L-Fuc-(1-&gt;2)-beta-D-Gal-(1-&gt;3)-beta-D-GlcNAc derivative + GDP + H(+). The catalysed reaction is a beta-D-galactosyl-(1-&gt;4)-N-acetyl-beta-D-glucosaminyl derivative + GDP-beta-L-fucose = an alpha-L-Fuc-(1-&gt;2)-beta-D-Gal-(1-&gt;4)-beta-D-GlcNAc derivative + GDP + H(+). The enzyme catalyses a neolactoside nLc4Cer + GDP-beta-L-fucose = a neolactoside IV(2)-alpha-Fuc-nLc4Cer + GDP + H(+). It carries out the reaction a neolactoside nLc4Cer(d18:1(4E)) + GDP-beta-L-fucose = a neolactoside IV(2)-alpha-Fuc-nLc4Cer(d18:1(4E)) + GDP + H(+). It catalyses the reaction a ganglioside GM1 + GDP-beta-L-fucose = a ganglioside Fuc-GM1 + GDP + H(+). The catalysed reaction is a ganglioside GA1 + GDP-beta-L-fucose = a ganglioside Fuc-GA1 + GDP + H(+). The enzyme catalyses Lc4Cer + GDP-beta-L-fucose = alpha-L-fucosyl-(1-&gt;2)-beta-D-galactosyl-(1-&gt;3)-N-acetyl-beta-D-glucosaminyl-(1-&gt;3)-beta-D-galactosyl-(1-&gt;4)-beta-D-glucosyl-(1&lt;-&gt;1')-ceramide + GDP + H(+). It carries out the reaction a beta-D-Gal-(1-&gt;3)-beta-D-GlcNAc-(1-&gt;3)-beta-D-Gal-(1-&gt;4)-beta-D-Glc-(1&lt;-&gt;1')-Cer(d18:1(4E)) + GDP-beta-L-fucose = alpha-L-fucosyl-(1-&gt;2)- beta-D-galactosyl-(1-&gt;3)-N-acetyl-beta-D-glucosaminyl-(1-&gt;3)-beta-D-galactosyl-(1-&gt;4)-beta-D-glucosyl-(1&lt;-&gt;1')-N-acylsphing-4-enine + GDP + H(+). It catalyses the reaction a ganglioside GD1b + GDP-beta-L-fucose = a ganglioside Fuc-GD1b + GDP + H(+). The catalysed reaction is a ganglioside GM1 (d18:1(4E)) + GDP-beta-L-fucose = a ganglioside Fuc-GM1 (d18:1(4E)) + GDP + H(+). The enzyme catalyses a globoside GalGb4Cer (d18:1(4E)) + GDP-beta-L-fucose = a globoside Globo-H (d18:1(4E)) + GDP + H(+). It carries out the reaction a lactoside III(4)-a-Fuc-Lc4Cer + GDP-beta-L-fucose = a lactoside IV(2),III(4)-a-[Fuc]2-Lc4Cer + GDP + H(+). It catalyses the reaction beta-D-galactosyl-(1-&gt;3)-N-acetyl-D-galactosamine + GDP-beta-L-fucose = alpha-L-fucosyl-(1-&gt;2)-beta-D-galactosyl-(1-&gt;3)-N-acetyl-D-galactosamine + GDP + H(+). It participates in protein modification; protein glycosylation. In terms of biological role, catalyzes the transfer of L-fucose, from a guanosine diphosphate-beta-L-fucose, to the terminal galactose on both O- and N-linked glycans chains of cell surface glycoproteins and glycolipids and the resulting epitope regulates several processes such as cell-cell interaction including host-microbe interaction, cell surface expression and cell proliferation. Preferentially fucosylates gangliosides GA1 and GM1 in the antrum, cecum and colon and in the female reproductive organs. Fucosylated host glycoproteins or glycolipids mediate interaction with intestinal microbiota influencing its composition. Creates a soluble precursor oligosaccharide FuC-alpha ((1,2)Galbeta-) called the H antigen which is an essential substrate for the final step in the soluble ABO blood group antigen synthesis pathway. This Mus musculus (Mouse) protein is Galactoside alpha-(1,2)-fucosyltransferase 2.